The sequence spans 461 residues: Protein KlcB (461 aa).

2 disordered regions span residues 84-107 (PEAT…TEDK) and 349-379 (RAKA…EDAP). Positions 91 to 101 (ARRRTKARKSK) are enriched in basic residues. Residues 357–377 (GQRREPVTPAKPEPEPAKDED) show a composition bias toward basic and acidic residues.

In Escherichia coli, this protein is Protein KlcB (klcB).